Here is a 246-residue protein sequence, read N- to C-terminus: Hydroxyacylglutathione hydrolase (246 aa).

Residues His-58, His-60, Asp-62, His-63, His-117, Asp-137, and His-175 each contribute to the Zn(2+) site.

This sequence belongs to the metallo-beta-lactamase superfamily. Glyoxalase II family. Monomer. Zn(2+) serves as cofactor.

It catalyses the reaction an S-(2-hydroxyacyl)glutathione + H2O = a 2-hydroxy carboxylate + glutathione + H(+). It functions in the pathway secondary metabolite metabolism; methylglyoxal degradation; (R)-lactate from methylglyoxal: step 2/2. Thiolesterase that catalyzes the hydrolysis of S-D-lactoyl-glutathione to form glutathione and D-lactic acid. This chain is Hydroxyacylglutathione hydrolase, found in Prochlorococcus marinus (strain MIT 9301).